A 157-amino-acid chain; its full sequence is MAEKKNEQEIQQELQRLIAEINRLQGQMEAINAQIDLIESSISELNRVEETLKGVKELEGDEEVLVPVGAQSFVRACVTDTERVIVGIGAGVAVERTIDEALESIDDQRQELEKARAEAQQKLQELAQELQEKQRKAQELAQQLEGAQRIAQQSGGG.

It belongs to the prefoldin subunit alpha family. In terms of assembly, heterohexamer of two alpha and four beta subunits.

The protein resides in the cytoplasm. In terms of biological role, molecular chaperone capable of stabilizing a range of proteins. Seems to fulfill an ATP-independent, HSP70-like function in archaeal de novo protein folding. The sequence is that of Prefoldin subunit alpha from Methanopyrus kandleri (strain AV19 / DSM 6324 / JCM 9639 / NBRC 100938).